The sequence spans 254 residues: Alcohol dehydrogenase (254 aa).

Residue phenylalanine 10 to leucine 33 participates in NAD(+) binding. Serine 138 contributes to the substrate binding site. Tyrosine 151 functions as the Proton acceptor in the catalytic mechanism.

This sequence belongs to the short-chain dehydrogenases/reductases (SDR) family. As to quaternary structure, homodimer.

The catalysed reaction is a primary alcohol + NAD(+) = an aldehyde + NADH + H(+). It catalyses the reaction a secondary alcohol + NAD(+) = a ketone + NADH + H(+). This is Alcohol dehydrogenase (Adh1) from Drosophila lacicola (Fruit fly).